The sequence spans 586 residues: MPKPINVRVTTMDAELEFAIQPNTTGKQLFDQVVKTIGLREVWYFGLQYVDNKGFPTWLKLDKKVSAQEVRKENPVQFKFRAKFYPEDVAEELIQDITQKLFFLQVKDGILSDEIYCPPETAVLLGSYAVQAKFGDYNKEMHKSGYLSSERLIPQRVMDQHKLSRDQWEDRIQVWHAEHRGMLKDSAMLEYLKIAQDLEMYGINYFEIKNKKGTDLWLGVDALGLNIYEKDDKLTPKIGFPWSEIRNISFNDKKFVIKPIDKKAPDFVFYAPRLRINKRILQLCMGNHELYMRRRKPDTIEVQQMKAQAREEKHQKQLERQQLETEKKRRETVEREKEQMLREKEELMLRLQDYEQKTKRAEKELSEQIEKALQLEEERRRAQEEAERLEADRMAALRAKEELERQAQDQIKSQEQLAAELAEYTAKIALLEEARRRKEDEVEEWQHRAKEAQDDLVKTKEELHLVMTAPPPPPPPVYEPVNYHVQEGLQDEGAEPMGYSAELSSEGILDDRNEEKRITEAEKNERVQRQLLTLSNELSQARDENKRTHNDIIHNENMRQGRDKYKTLRQIRQGNTKQRIDEFEAM.

Residues 2-295 enclose the FERM domain; that stretch reads PKPINVRVTT…GNHELYMRRR (294 aa). Lysine 60 is subject to N6-acetyllysine. The [IL]-x-C-x-x-[DE] motif signature appears at 115-120; sequence IYCPPE. Position 146 is a phosphotyrosine; by PDGFR (tyrosine 146). Residues 244–586 form an interaction with SCYL3 region; the sequence is EIRNISFNDK…KQRIDEFEAM (343 aa). Positions 302-462 form a coiled coil; that stretch reads VQQMKAQARE…QDDLVKTKEE (161 aa). Residues 306 to 338 are disordered; it reads KAQAREEKHQKQLERQQLETEKKRRETVEREKE. The span at 308–338 shows a compositional bias: basic and acidic residues; sequence QAREEKHQKQLERQQLETEKKRRETVEREKE. The residue at position 354 (tyrosine 354) is a Phosphotyrosine; by PDGFR. Serine 366 is subject to Phosphoserine. Tyrosine 478 is subject to Phosphotyrosine. The tract at residues 534–565 is disordered; that stretch reads LSNELSQARDENKRTHNDIIHNENMRQGRDKY. Serine 535 carries the post-translational modification Phosphoserine. Over residues 540–565 the composition is skewed to basic and acidic residues; it reads QARDENKRTHNDIIHNENMRQGRDKY. Residue threonine 567 is modified to Phosphothreonine; by ROCK2 and PKC/PRKCI.

Interacts with PALS1 and NHERF2. Found in a complex with EZR, PODXL and NHERF2. Interacts with MCC, PLEKHG6, PODXL, SCYL3/PACE1, NHERF1 and TMEM8B. Interacts (when phosphorylated) with FES/FPS. Interacts with dimeric S100P, the interaction may be activating through unmasking of F-actin binding sites. Identified in complexes that contain VIM, EZR, AHNAK, BFSP1, BFSP2, ANK2, PLEC, PRX and spectrin. Detected in a complex composed of at least EZR, AHNAK, PPL and PRX. Interacts with PDPN (via cytoplasmic domain); activates RHOA and promotes epithelial-mesenchymal transition. Interacts with SPN/CD43 cytoplasmic tail. Interacts with CD44 and ICAM2. Interacts with SLC9A3; interaction targets SLC9A3 to the apical membrane. Interacts with SLC9A1; regulates interactions of SLC9A1 with cytoskeletal and promotes stress fiber formation. Interacts with CLIC5; may work together in a complex which also includes RDX and MYO6 to stabilize linkages between the plasma membrane and subjacent actin cytoskeleton at the base of stereocilia. In terms of processing, phosphorylated by tyrosine-protein kinases. Phosphorylation by ROCK2 suppresses the head-to-tail association of the N-terminal and C-terminal halves resulting in an opened conformation which is capable of actin and membrane-binding. S-nitrosylation is induced by interferon-gamma and oxidatively-modified low-densitity lipoprotein (LDL(ox)) possibly implicating the iNOS-S100A8/9 transnitrosylase complex. As to expression, detected in eye lens fiber cells. Expressed in cerebrum and cerebellum (at protein level). Component of the microvilli of intestinal epithelial cells.

It is found in the apical cell membrane. The protein localises to the cell projection. It localises to the microvillus membrane. Its subcellular location is the ruffle membrane. The protein resides in the cytoplasm. It is found in the cell cortex. The protein localises to the cytoskeleton. It localises to the microvillus. With respect to regulation, a head-to-tail association, of the N-terminal and C-terminal halves results in a closed conformation (inactive form) which is incapable of actin or membrane-binding. Probably involved in connections of major cytoskeletal structures to the plasma membrane. In epithelial cells, required for the formation of microvilli and membrane ruffles on the apical pole. Along with PLEKHG6, required for normal macropinocytosis. The chain is Ezrin (Ezr) from Mus musculus (Mouse).